The following is a 1704-amino-acid chain: Nonribosomal peptide synthetase ivoA (1704 aa).

Residues 234 to 620 (EEQAIARPDQ…HGRKDLEVKI (387 aa)) are adenylation. Residues 748-827 (NLISDPSDSM…EMATKTSAVE (80 aa)) enclose the Carrier domain. Residue S785 is modified to O-(pantetheine 4'-phosphoryl)serine. The segment at 840–1266 (FPLSPVQQMY…QELLETAVER (427 aa)) is epimerization (E) domain. A condensation region spans residues 1325 to 1477 (VQGDWTIEKT…AQSSTPSARK (153 aa)).

This sequence belongs to the NRP synthetase family.

The catalysed reaction is L-tryptophan + ATP + H2O = D-tryptophan + AMP + diphosphate + H(+). The protein operates within pigment biosynthesis. Its function is as follows. Nonribosomal peptide synthetase; part of the pathway that mediates the biosynthesis of the gray-brown conidiophore pigment. The first step of the pathway is performed by the nonribosomal peptide synthetase ivoA that catalyzes ATP-dependent unidirectional stereoinversion of L-tryptophan to D-tryptophan with complete conversion. While the stereoinversion is catalyzed by the epimerization (E) domain of ivoA, the terminal condensation (C) domain stereoselectively hydrolyzes D-tryptophanyl-S-phosphopantetheine thioester and thus represents a non-canonical C domain function. D-tryptophan is acetylated, probably by an endogenous acetyltransferase. N-acetyltryptophan is further 6-hydroxylated into N-acetyl-6-hydroxytryptophan (AHT) by the cytochrome P450 monooxygenase ivoC. N-acetyl-6-hydroxytryptophan is substrate of the N-acetyl-6-hydroxytryptophan oxidase ivoB to produce the gray-brown conidiophore pigment. The chain is Nonribosomal peptide synthetase ivoA from Emericella nidulans (strain FGSC A4 / ATCC 38163 / CBS 112.46 / NRRL 194 / M139) (Aspergillus nidulans).